A 343-amino-acid chain; its full sequence is Protein RecA (343 aa).

ATP is bound at residue 66 to 73 (GPESSGKT).

It belongs to the RecA family.

Its subcellular location is the cytoplasm. Can catalyze the hydrolysis of ATP in the presence of single-stranded DNA, the ATP-dependent uptake of single-stranded DNA by duplex DNA, and the ATP-dependent hybridization of homologous single-stranded DNAs. It interacts with LexA causing its activation and leading to its autocatalytic cleavage. The sequence is that of Protein RecA from Nitrosomonas eutropha (strain DSM 101675 / C91 / Nm57).